A 271-amino-acid polypeptide reads, in one-letter code: MNKSLIIFGIVNITSDSFSDGGRYLAPDAAIAQARKLMAEGADVIDLGPASSNPDAAPVSSDTEIARIAPVLDALKADGIPVSLDSYQPATQAYALSRGVAYLNDIRGFPDAAFYPQLAKSSAKLVVMHSVQDGQADRREAPAGDIMDHIAAFFDARIAALTGAGIKRNRLVLDPGMGFFLGAAPETSLSVLARFDELRLRFDLPVLLSVSRKSFLRALTGRGPGDVGAATLAAELAAAAGGADFIRTHEPRPLRDGLAVLAALKETARIR.

One can recognise a Pterin-binding domain in the interval 1–259; sequence MNKSLIIFGI…EPRPLRDGLA (259 aa). Residue N12 coordinates 4-aminobenzoate. The diphosphate site is built by N12, F18, S51, and S52. Mg(2+) is bound at residue N12. 7,8-dihydropteroate-binding residues include S52, D85, N104, D174, F179, K213, and S214. D85, N104, and D174 together coordinate (7,8-dihydropterin-6-yl)methyl diphosphate. 6-hydroxymethyl-7,8-dihydropterin-binding residues include N104 and D174. Residue K213 coordinates (7,8-dihydropterin-6-yl)methyl diphosphate. Residue K213 participates in 6-hydroxymethyl-7,8-dihydropterin binding. Residue R247 coordinates 4-aminobenzoate. Diphosphate is bound by residues R247 and H249. 247–249 contributes to the (7,8-dihydropterin-6-yl)methyl diphosphate binding site; the sequence is RTH.

The protein belongs to the DHPS family. Homodimer. Mg(2+) serves as cofactor.

It carries out the reaction (7,8-dihydropterin-6-yl)methyl diphosphate + 4-aminobenzoate = 7,8-dihydropteroate + diphosphate. The protein operates within cofactor biosynthesis; tetrahydrofolate biosynthesis; 7,8-dihydrofolate from 2-amino-4-hydroxy-6-hydroxymethyl-7,8-dihydropteridine diphosphate and 4-aminobenzoate: step 1/2. Functionally, catalyzes the condensation of para-aminobenzoate (pABA) with 6-hydroxymethyl-7,8-dihydropterin diphosphate (DHPt-PP) to form 7,8-dihydropteroate (H2Pte), the immediate precursor of folate derivatives. Confers resistance to sulfonamide antibiotics, including sulfamethoxazole (SMX), sulfadiazine and sulfisoxazole. The type II enzyme is stable whereas type I DHPS loses its activity rapidly. The sequence is that of Dihydropteroate synthase type-2 from Escherichia coli.